Here is a 91-residue protein sequence, read N- to C-terminus: Anther-specific protein RTS (91 aa).

The N-terminal stretch at 1-21 is a signal peptide; sequence MVRVGAAAAVLVLAAAAAAMA.

Required for tapetum and pollen development. This is Anther-specific protein RTS from Oryza sativa subsp. japonica (Rice).